The chain runs to 376 residues: Polar flagellin A (376 aa).

2 coiled-coil regions span residues 103–128 (SNSKAERVAIQEEVTALNDELNRIAE) and 310–338 (FQNRFNHAISNLDNINENVNASNSRIKDT).

The protein belongs to the bacterial flagellin family. Heteromer of multiple flagellin subunits including FlaA, FlaB/D, FlaC, FlaE and FlaF.

It localises to the secreted. The protein localises to the bacterial flagellum. In terms of biological role, flagellin is the subunit protein which polymerizes to form the filaments of bacterial flagella. FlaA is not essential for polar flagellar synthesis and swimming motility. Homomer of FlaA is able to form a functional filament. In Vibrio parahaemolyticus serotype O3:K6 (strain RIMD 2210633), this protein is Polar flagellin A (flaA).